The primary structure comprises 220 residues: Casparian strip membrane protein 4 (220 aa).

The interval 1–39 is disordered; the sequence is MDSRREVEESSTAPILESKRTRSNGKGKSIDGDHSPPHA. Over 1 to 60 the chain is Cytoplasmic; that stretch reads MDSRREVEESSTAPILESKRTRSNGKGKSIDGDHSPPHAATVVTTKATPLQKGGMKKGIA. A helical transmembrane segment spans residues 61-81; sequence ILDFILRLGAIGAALGAAVIM. Topologically, residues 82–108 are extracellular; the sequence is GTNEQILPFFTQFLQFHAQWDDFPMFK. The helical transmembrane segment at 109–129 threads the bilayer; that stretch reads FFVVANGAAAGFLILSLPFSI. Topologically, residues 130–141 are cytoplasmic; that stretch reads VCIVRPLAAGPR. The helical transmembrane segment at 142-162 threads the bilayer; it reads FLLVIVDLVLMALVVAAASSA. At 163–194 the chain is on the extracellular side; that stretch reads AAVVYLAHNGSQDANWNAICQQFTDFCQGSSL. An N-linked (GlcNAc...) asparagine glycan is attached at Asn-171. A helical transmembrane segment spans residues 195 to 215; the sequence is AVVASFVASVFLACLVVVSSV. The Cytoplasmic portion of the chain corresponds to 216 to 220; it reads ALKRT.

It belongs to the Casparian strip membrane proteins (CASP) family. Homodimer and heterodimers.

The protein resides in the cell membrane. In terms of biological role, regulates membrane-cell wall junctions and localized cell wall deposition. Required for establishment of the Casparian strip membrane domain (CSD) and the subsequent formation of Casparian strips, a cell wall modification of the root endodermis that determines an apoplastic barrier between the intraorganismal apoplasm and the extraorganismal apoplasm and prevents lateral diffusion. The chain is Casparian strip membrane protein 4 from Medicago truncatula (Barrel medic).